The following is a 360-amino-acid chain: Phospho-N-acetylmuramoyl-pentapeptide-transferase (360 aa).

10 helical membrane-spanning segments follow: residues 27 to 47, 71 to 91, 93 to 113, 134 to 154, 168 to 188, 199 to 219, 239 to 259, 262 to 282, 288 to 308, and 337 to 357; these read GAFM…INVL, TPTM…LLWA, WDNP…LIGF, LALG…NHPA, TLIN…VGSA, GLAI…AYAV, ILIF…YNAP, AVFM…AIAV, LVLA…IIQV, and TIVI…LATL.

Belongs to the glycosyltransferase 4 family. MraY subfamily. Requires Mg(2+) as cofactor.

The protein resides in the cell inner membrane. The enzyme catalyses UDP-N-acetyl-alpha-D-muramoyl-L-alanyl-gamma-D-glutamyl-meso-2,6-diaminopimeloyl-D-alanyl-D-alanine + di-trans,octa-cis-undecaprenyl phosphate = di-trans,octa-cis-undecaprenyl diphospho-N-acetyl-alpha-D-muramoyl-L-alanyl-D-glutamyl-meso-2,6-diaminopimeloyl-D-alanyl-D-alanine + UMP. It participates in cell wall biogenesis; peptidoglycan biosynthesis. Catalyzes the initial step of the lipid cycle reactions in the biosynthesis of the cell wall peptidoglycan: transfers peptidoglycan precursor phospho-MurNAc-pentapeptide from UDP-MurNAc-pentapeptide onto the lipid carrier undecaprenyl phosphate, yielding undecaprenyl-pyrophosphoryl-MurNAc-pentapeptide, known as lipid I. This is Phospho-N-acetylmuramoyl-pentapeptide-transferase from Ruegeria pomeroyi (strain ATCC 700808 / DSM 15171 / DSS-3) (Silicibacter pomeroyi).